A 510-amino-acid chain; its full sequence is Cytochrome P450 monooxygenase BOT1 (510 aa).

Residues P16–V36 traverse the membrane as a helical segment. C454 is a binding site for heme. N476 carries an N-linked (GlcNAc...) asparagine glycan.

Belongs to the cytochrome P450 family. Requires heme as cofactor.

The protein localises to the membrane. Its pathway is secondary metabolite biosynthesis. In terms of biological role, cytochrome P450 monooxygenase; part of the gene cluster that mediates the biosynthesis of botrydial. Botrydial is necessary for colonization of plant tissue by the T4 strain. It is a strain-dependent virulence factor since highly aggressive strains like SAS56 or B05 still retain substantial virulence when botrydial synthesis is impaired, since they produce also botcinic acid. The first step of botrydial biosynthesis is performed by the sesquiterpene synthase BOT2 which catalyzes the cyclization of farnesyl diphosphate (FPP) to presilphiperfolan-8-beta-ol (PSP). The cytochrome P450 monooxygenase BOT4 then catalyzes the hydroxylation at C-4 to give a probotryane intermediate. Acetylation of the hydroxyl at C-4 is carried out by the acetyltransferase BOT5, followed by the combined action of the P450 monooxygenases BOT3 and BOT1, to yield finally the glycol, via the regio- and stereospecific hydroxylations at C-10 and C-15 of the probotryane intermediates, respectively. The cleavage of the C10-C15 bond of probotryane skeleton is an intriguing and chemically important reaction, which could be mediated by some of the monooxygenases or by a combination of them. It is possible that either BOT3 or BOT1 would oxidize either the 10- or the 15-hydroxy group to the hydroperoxide derivative, which would then undergo heterolytic fragmentation to give the dialdehyde botrydial. Finally, the dehydrogenase BOT7 might be involved in the conversion of botrydial to dihydrobotrydial. The chain is Cytochrome P450 monooxygenase BOT1 from Botryotinia fuckeliana (Noble rot fungus).